The primary structure comprises 198 residues: V-type proton ATPase subunit E (198 aa).

It belongs to the V-ATPase E subunit family.

Its function is as follows. Produces ATP from ADP in the presence of a proton gradient across the membrane. The polypeptide is V-type proton ATPase subunit E (Borrelia hermsii (strain HS1 / DAH)).